The following is a 422-amino-acid chain: La-related protein 6A (422 aa).

Positions 1–94 (MSSLPLRSGE…DHGENPVETD (94 aa)) are disordered. The segment covering 48–61 (VTESSDDVVVNVSE) has biased composition (low complexity). The segment covering 73–89 (DHERNSGEDRDQDHGEN) has biased composition (basic and acidic residues). In terms of domain architecture, HTH La-type RNA-binding spans 97–188 (VVPIDELNQK…KRLSPLPEIR (92 aa)). Residues 193 to 283 (FTVLVENLPE…NGLRVKLLEQ (91 aa)) form the RRM domain. A disordered region spans residues 286–422 (GKFAQRRPAR…PTSTQTSHEV (137 aa)). Basic and acidic residues predominate over residues 295 to 348 (RREVDKEKDTTGRVHDQTGGEKNKKTREHQNHRLHHSDNPADDDGGNHQKDKNG).

The protein localises to the nucleus. Functionally, transcriptional regulator. The chain is La-related protein 6A (LARP6A) from Arabidopsis thaliana (Mouse-ear cress).